Here is an 847-residue protein sequence, read N- to C-terminus: Aryl hydrocarbon receptor (847 aa).

The disordered stretch occupies residues 1–39; the sequence is MNGGGANITYASRKRRKPVQKTVKPIPAEGIKSNPSKRH. 2 consecutive short sequence motifs (nuclear localization signal) follow at residues 13 to 16 and 37 to 42; these read RKRR and KRHRDR. The 54-residue stretch at 27 to 80 folds into the bHLH domain; it reads PAEGIKSNPSKRHRDRLNTELDRLASLLPFPQDVINKLDKLSVLRLSVSYLRAK. Residues 38-66 form a DNA-binding region; sequence RHRDRLNTELDRLASLLPFPQDVINKLDK. Required for maintaining the overall integrity of the AHR:ARNT heterodimer and its transcriptional activity regions lie at residues 50 to 82, 117 to 125, and 264 to 266; these read LASL…AKSF, LLQALNGFV, and FAI. The Nuclear export signal motif lies at 64 to 72; sequence LDKLSVLRL. The PAS 1 domain maps to 120–173; that stretch reads ALNGFVLVVTVDALVFYASSTIQDYLGFQQSDVIHQSVYELIHTEDRAEFQRQL. Positions 281–336 constitute a PAS 2 domain; sequence KNFIFRTKHKLDFTPTGCDAKGQIVLGYTEAELCMRGSGYQFIHAADMLYCAESHI. A PAC domain is found at 346–384; that stretch reads LAVFRLLTKDNRWAWVQSNARFIYKNGRPDFIIATQRPL. Disordered regions lie at residues 430 to 452 and 825 to 847; these read KSGT…VHPS and HLPP…GRLL. Over residues 440-452 the composition is skewed to polar residues; that stretch reads TKPTPSKDSVHPS.

As to quaternary structure, homodimer. Heterodimer; efficient DNA binding requires dimerization with another bHLH protein. Binds MYBBP1A. Interacts with coactivators including SRC-1, RIP140 and NOCA7, and with the corepressor SMRT. Interacts with NEDD8 and IVNS1ABP. Interacts with BMAL1. Interacts with HSP90AB1. Interacts with ARNT; the heterodimer ARNT:AHR binds to core DNA sequence 5'-TGCGTG-3' within the dioxin response element (DRE) of target gene promoters and activates their transcription. Interacts with TIPARP; leading to mono-ADP-ribosylation of AHR and subsequent inhibition of AHR. Mono-ADP-ribosylated, leading to inhibit transcription activator activity of AHR.

Its subcellular location is the cytoplasm. It is found in the nucleus. In terms of biological role, ligand-activated transcription factor that enables cells to adapt to changing conditions by sensing compounds from the environment, diet, microbiome and cellular metabolism, and which plays important roles in development, immunity and cancer. Upon ligand binding, translocates into the nucleus, where it heterodimerizes with ARNT and induces transcription by binding to xenobiotic response elements (XRE). Regulates a variety of biological processes, including angiogenesis, hematopoiesis, drug and lipid metabolism, cell motility and immune modulation. Xenobiotics can act as ligands: upon xenobiotic-binding, activates the expression of multiple phase I and II xenobiotic chemical metabolizing enzyme genes (such as the CYP1A1 gene). Mediates biochemical and toxic effects of halogenated aromatic hydrocarbons. Next to xenobiotics, natural ligands derived from plants, microbiota, and endogenous metabolism are potent AHR agonists. Tryptophan (Trp) derivatives constitute an important class of endogenous AHR ligands. Acts as a negative regulator of anti-tumor immunity: indoles and kynurenic acid generated by Trp catabolism act as ligand and activate AHR, thereby promoting AHR-driven cancer cell motility and suppressing adaptive immunity. Regulates the circadian clock by inhibiting the basal and circadian expression of the core circadian component PER1. Inhibits PER1 by repressing the CLOCK-BMAL1 heterodimer mediated transcriptional activation of PER1. The heterodimer ARNT:AHR binds to core DNA sequence 5'-TGCGTG-3' within the dioxin response element (DRE) of target gene promoters and activates their transcription. The sequence is that of Aryl hydrocarbon receptor (AHR) from Oryctolagus cuniculus (Rabbit).